We begin with the raw amino-acid sequence, 358 residues long: scyllo-inositol 2-dehydrogenase (NADP(+)) IolW (358 aa).

The protein belongs to the Gfo/Idh/MocA family.

The catalysed reaction is scyllo-inositol + NADP(+) = scyllo-inosose + NADPH + H(+). Catalyzes the reversible NADPH-dependent reduction of scyllo-inosose (SIS) to scyllo-inositol (SI). Cannot use NADH instead of NADPH. May be involved in reduction of not only SIS but also various oxidized compounds manifested upon stressful conditions. The protein is scyllo-inositol 2-dehydrogenase (NADP(+)) IolW of Bacillus subtilis (strain 168).